Here is a 526-residue protein sequence, read N- to C-terminus: Inosine-5'-monophosphate dehydrogenase (526 aa).

CBS domains follow at residues 120–179 (FIQD…EDPV) and 183–239 (MATD…PLAS). NAD(+)-binding positions include 276 to 278 (DSS) and 326 to 328 (GMG). K(+) contacts are provided by Gly-328 and Gly-330. Ser-331 lines the IMP pocket. Cys-333 is a binding site for K(+). Residue Cys-333 is the Thioimidate intermediate of the active site. Residues 366–368 (DGG) and 389–390 (GS) contribute to the IMP site. The active-site Proton acceptor is the Arg-439. Residue Gln-451 participates in IMP binding. Ser-506 is a binding site for K(+). The segment at 506–526 (SAQTEGNVHGLHTHEKKLYSS) is disordered. Over residues 517–526 (HTHEKKLYSS) the composition is skewed to basic and acidic residues.

The protein belongs to the IMPDH/GMPR family. In terms of assembly, homotetramer. Requires K(+) as cofactor.

It is found in the cytoplasm. The enzyme catalyses IMP + NAD(+) + H2O = XMP + NADH + H(+). It functions in the pathway secondary metabolite biosynthesis; terpenoid biosynthesis. Its activity is regulated as follows. Mycophenolic acid (MPA) is a non-competitive inhibitor that prevents formation of the closed enzyme conformation by binding to the same site as the amobile flap. In contrast, mizoribine monophosphate (MZP) is a competitive inhibitor that induces the closed conformation. MPA is a potent inhibitor of mammalian IMPDHs but a poor inhibitor of the bacterial enzymes. MZP is a more potent inhibitor of bacterial IMPDH. Its function is as follows. Catalyzes the conversion of inosine 5'-phosphate (IMP) to xanthosine 5'-phosphate (XMP), the first committed and rate-limiting step in the de novo synthesis of guanine nucleotides, and therefore plays an important role in the regulation of cell growth. Part of the gene cluster that mediates the biosynthesis of mycophenolic acid (MPA), the first isolated antibiotic natural product in the world. Does not play a role in the biosynthesis of MPA, but is involved in self resistance to MPA, since MPA acts as an inhibitor of IMP dehydrogenases. The sequence is that of Inosine-5'-monophosphate dehydrogenase from Penicillium roqueforti (strain FM164).